The chain runs to 400 residues: Enoyl-[acyl-carrier-protein] reductase [NADH] (400 aa).

NAD(+) is bound by residues 48–53, 74–75, 111–112, and 139–140; these read GASTGY, FE, DA, and LA. Tyr225 serves as a coordination point for substrate. Tyr235 acts as the Proton donor in catalysis. NAD(+)-binding positions include Lys244 and 273-275; that span reads VVT.

It belongs to the TER reductase family. As to quaternary structure, monomer.

It carries out the reaction a 2,3-saturated acyl-[ACP] + NAD(+) = a (2E)-enoyl-[ACP] + NADH + H(+). The protein operates within lipid metabolism; fatty acid biosynthesis. Functionally, involved in the final reduction of the elongation cycle of fatty acid synthesis (FAS II). Catalyzes the reduction of a carbon-carbon double bond in an enoyl moiety that is covalently linked to an acyl carrier protein (ACP). The polypeptide is Enoyl-[acyl-carrier-protein] reductase [NADH] (Burkholderia cenocepacia (strain ATCC BAA-245 / DSM 16553 / LMG 16656 / NCTC 13227 / J2315 / CF5610) (Burkholderia cepacia (strain J2315))).